Here is a 543-residue protein sequence, read N- to C-terminus: Malate synthase (543 aa).

The protein belongs to the malate synthase family. As to quaternary structure, homodimer.

It localises to the cytoplasm. The catalysed reaction is glyoxylate + acetyl-CoA + H2O = (S)-malate + CoA + H(+). It functions in the pathway carbohydrate metabolism; glyoxylate cycle; (S)-malate from isocitrate: step 2/2. The polypeptide is Malate synthase (aceB) (Streptomyces arenae).